The primary structure comprises 770 residues: Protein PAT1 homolog 1 (770 aa).

The interval 1–26 (MFRYESLEDCPLDEDEDAFQGLGEED) is disordered. The segment at 1-84 (MFRYESLEDC…EMDLLGDHEE (84 aa)) is region A; interaction with DDX6/RCK. An involved in nuclear foci localization region spans residues 1–397 (MFRYESLEDC…HRSSHQDHLR (397 aa)). The span at 7–26 (LEDCPLDEDEDAFQGLGEED) shows a compositional bias: acidic residues. Residues 85–388 (NLAERLSKMV…LNGAGDRGSH (304 aa)) form a region N; interaction with decapping machinery region. The short motif at 86–95 (LAERLSKMVI) is the Nuclear export signal element. Position 177 is a phosphoserine (serine 177). Position 178 is a phosphothreonine (threonine 178). 2 positions are modified to phosphoserine: serine 179 and serine 184. Threonine 194 carries the phosphothreonine modification. Asymmetric dimethylarginine is present on residues arginine 217, arginine 223, and arginine 263. Residues 223-397 (RYPAPYGERM…HRSSHQDHLR (175 aa)) are involved in RNA-binding. Serine 278 carries the phosphoserine modification. At arginine 284 the chain carries Asymmetric dimethylarginine. Low complexity predominate over residues 314-323 (GFRAFFSAPP). Disordered regions lie at residues 314–344 (GFRA…QNLR) and 360–399 (QHRR…LRKD). The span at 324–337 (SATPPPQQHPPGPG) shows a compositional bias: pro residues. Residues 367 to 380 (QRQQQNRSQHRNLN) are compositionally biased toward low complexity. The residue at position 385 (arginine 385) is an Omega-N-methylarginine. Positions 385–399 (RGSHRSSHQDHLRKD) are enriched in basic and acidic residues. The region H stretch occupies residues 389 to 448 (RSSHQDHLRKDPYANLMLQREKDWVSKIQMMQLQSTDPYLDDFYYQNYFEKLEKLSAAEE). Positions 398–770 (KDPYANLMLQ…TKLQLVQGIR (373 aa)) are involved in nuclear speckle localization. Residues 449-770 (IQGDGPKKER…TKLQLVQGIR (322 aa)) are region C.

Belongs to the PAT1 family. Interacts (via region A) with DDX6/RCK. Interacts (via region H and region C) with LSM1 and LSM4. Interacts (via region N) with DCP1A, DCP2, EDC3, EDC4 and XRN1. Interacts with the CCR4-NOT complex. Interacts with the Lsm-containing SMN-Sm protein complex. Interacts with EIF4ENIF1/4E-T. In terms of tissue distribution, ubiquitous.

The protein localises to the cytoplasm. The protein resides in the P-body. Its subcellular location is the nucleus. It is found in the PML body. It localises to the nucleus speckle. Functionally, RNA-binding protein involved in deadenylation-dependent decapping of mRNAs, leading to the degradation of mRNAs. Acts as a scaffold protein that connects deadenylation and decapping machinery. Required for cytoplasmic mRNA processing body (P-body) assembly. In terms of biological role, (Microbial infection) In case of infection, required for translation and replication of hepatitis C virus (HCV). The protein is Protein PAT1 homolog 1 (PATL1) of Homo sapiens (Human).